We begin with the raw amino-acid sequence, 600 residues long: Proline--tRNA ligase (600 aa).

Belongs to the class-II aminoacyl-tRNA synthetase family. ProS type 1 subfamily. As to quaternary structure, homodimer.

The protein resides in the cytoplasm. It catalyses the reaction tRNA(Pro) + L-proline + ATP = L-prolyl-tRNA(Pro) + AMP + diphosphate. Its function is as follows. Catalyzes the attachment of proline to tRNA(Pro) in a two-step reaction: proline is first activated by ATP to form Pro-AMP and then transferred to the acceptor end of tRNA(Pro). As ProRS can inadvertently accommodate and process non-cognate amino acids such as alanine and cysteine, to avoid such errors it has two additional distinct editing activities against alanine. One activity is designated as 'pretransfer' editing and involves the tRNA(Pro)-independent hydrolysis of activated Ala-AMP. The other activity is designated 'posttransfer' editing and involves deacylation of mischarged Ala-tRNA(Pro). The misacylated Cys-tRNA(Pro) is not edited by ProRS. This is Proline--tRNA ligase from Acaryochloris marina (strain MBIC 11017).